A 463-amino-acid polypeptide reads, in one-letter code: Elongation factor 1-alpha (463 aa).

The 238-residue stretch at 8 to 245 (KTHLNIVIIG…DALVPPVRPA (238 aa)) folds into the tr-type G domain. A G1 region spans residues 17 to 24 (GHVDSGKS). 17–24 (GHVDSGKS) is a binding site for GTP. The interval 73–77 (GITID) is G2. Positions 94–97 (DAPG) are G3. Residues 94 to 98 (DAPGH) and 156 to 159 (NKMD) contribute to the GTP site. A G4 region spans residues 156 to 159 (NKMD). Residues 197-199 (SGW) are G5.

The protein belongs to the TRAFAC class translation factor GTPase superfamily. Classic translation factor GTPase family. EF-Tu/EF-1A subfamily. As to quaternary structure, the 42S RNP particle comprises four subunits each of which contains one molecule of 5S RNA, three molecules of tRNA, two molecules of EF1-alpha and one molecule of the 5S RNA binding protein 43.

The protein resides in the cytoplasm. In terms of biological role, this protein is one of two protein components of a 42S RNP particle that is very abundant in previtellogenic oocytes. A major function served by 42sp50 appears to be the storage of tRNAs for later use in oogenesis and early embryogenesis. Purified 42S particles can directly transfer aminoacyl tRNA to ribosomes. In Xenopus laevis (African clawed frog), this protein is Elongation factor 1-alpha.